A 337-amino-acid chain; its full sequence is Cathepsin L-like (337 aa).

The first 18 residues, methionine 1 to serine 18, serve as a signal peptide directing secretion. Positions alanine 19–glutamine 119 are cleaved as a propeptide — activation peptide. Asparagine 108 carries N-linked (GlcNAc...) asparagine glycosylation. 3 cysteine pairs are disulfide-bonded: cysteine 141/cysteine 184, cysteine 175/cysteine 217, and cysteine 276/cysteine 326. Residue cysteine 144 is part of the active site. Catalysis depends on residues histidine 283 and asparagine 304.

It belongs to the peptidase C1 family. In terms of tissue distribution, expressed in intestine, pharynx posterior bulb, hypodermis and cuticle (at protein level). Expressed in germ cells, developing oocytes, sheath cells surrounding germ cells and oocytes, and in the eggshell (at protein level).

It localises to the secreted. The protein resides in the cytoplasmic granule. Its subcellular location is the lysosome. The protein localises to the endosome. It is found in the cytoplasmic vesicle. It localises to the phagosome. It carries out the reaction Specificity close to that of papain. As compared to cathepsin B, cathepsin L exhibits higher activity toward protein substrates, but has little activity on Z-Arg-Arg-NHMec, and no peptidyl-dipeptidase activity.. Its function is as follows. Cysteine protease which plays an essential role in the degradation of proteins in lysosomes. During early embryogenesis, maternally required for the proteolytic processing of yolk proteins in platelets, a lysosome-like structure where a slow and controlled degradation of yolk proteins occurs. In the gonad, required for the clearance of apoptotic germ cells in the engulfing cell phagolysosomes. In embryos, required for the degradation of endocytic and autophagic cargos. In embryos, may play a role in the degradation of lipid-containing droplets. Required for larval development. In Caenorhabditis elegans, this protein is Cathepsin L-like.